We begin with the raw amino-acid sequence, 1437 residues long: Myomesin-3 (1437 aa).

Residues 1–49 (MTLPHSLGGAGDPRPPQAMEVHRLEHRQEEEQKEERQHSLRMGSSVRRR) form a disordered region. The span at 20–38 (EVHRLEHRQEEEQKEERQH) shows a compositional bias: basic and acidic residues. A coiled-coil region spans residues 120–149 (RLLRQRRDWKTLRRRTEEKVQEAKELRELC). Ig-like C2-type domains are found at residues 154–246 (PWFW…AKVL) and 269–361 (PSVE…TYVL). Fibronectin type-III domains are found at residues 375–469 (SPLN…VMGD), 503–598 (PPTN…LRGP), 604–696 (PPAQ…VKQA), 702–797 (APYG…CKEW), and 804–899 (PPYD…LEDK). Ig-like C2-type domains lie at 1120 to 1205 (PYFE…LDLT) and 1334 to 1423 (AKVV…VTIS).

As to quaternary structure, homodimer.

Its subcellular location is the cytoplasm. It is found in the myofibril. The protein localises to the sarcomere. It localises to the m line. May link the intermediate filament cytoskeleton to the M-disk of the myofibrils in striated muscle. This chain is Myomesin-3 (MYOM3), found in Homo sapiens (Human).